The primary structure comprises 94 residues: Exodeoxyribonuclease 7 small subunit (94 aa).

Residues 1 to 21 (MPRAPNDAPSASATPSATPAS) form a disordered region.

This sequence belongs to the XseB family. In terms of assembly, heterooligomer composed of large and small subunits.

It localises to the cytoplasm. The catalysed reaction is Exonucleolytic cleavage in either 5'- to 3'- or 3'- to 5'-direction to yield nucleoside 5'-phosphates.. Bidirectionally degrades single-stranded DNA into large acid-insoluble oligonucleotides, which are then degraded further into small acid-soluble oligonucleotides. The protein is Exodeoxyribonuclease 7 small subunit of Ralstonia pickettii (strain 12J).